The primary structure comprises 501 residues: Lysine--tRNA ligase (501 aa).

Mg(2+) contacts are provided by Glu412 and Glu419.

This sequence belongs to the class-II aminoacyl-tRNA synthetase family. In terms of assembly, homodimer. It depends on Mg(2+) as a cofactor.

The protein localises to the cytoplasm. The enzyme catalyses tRNA(Lys) + L-lysine + ATP = L-lysyl-tRNA(Lys) + AMP + diphosphate. The chain is Lysine--tRNA ligase from Chlorobium luteolum (strain DSM 273 / BCRC 81028 / 2530) (Pelodictyon luteolum).